A 115-amino-acid chain; its full sequence is Putative ethidium bromide resistance protein (115 aa).

The next 4 helical transmembrane spans lie at 4–21 (WLFL…TSAL), 30–47 (LAPS…FYFL), 58–79 (VAYA…WLLH), and 85–104 (AWGF…ARSP).

This sequence belongs to the drug/metabolite transporter (DMT) superfamily. Small multidrug resistance (SMR) (TC 2.A.7.1) family.

The protein localises to the cell membrane. In terms of biological role, one of the determinants for resistance to ethidium bromide and quaternary ammonium compounds. The sequence is that of Putative ethidium bromide resistance protein (ebr) from Escherichia coli.